Reading from the N-terminus, the 583-residue chain is Lipoprotein LpqB (583 aa).

The signal sequence occupies residues 1–29; the sequence is MSNKTTEATKTTKVKKVLSVVAGLGLLAG. Cys30 carries N-palmitoyl cysteine lipidation. Cys30 carries the S-diacylglycerol cysteine lipid modification. The disordered stretch occupies residues 38-63; the sequence is NPEAISSYAPAPSGQEAPTPTDGQPS.

It belongs to the LpqB lipoprotein family.

It localises to the cell membrane. This chain is Lipoprotein LpqB, found in Corynebacterium jeikeium (strain K411).